Here is a 127-residue protein sequence, read N- to C-terminus: Small ribosomal subunit protein uS11 (127 aa).

The protein belongs to the universal ribosomal protein uS11 family. In terms of assembly, part of the 30S ribosomal subunit. Interacts with proteins S7 and S18. Binds to IF-3.

In terms of biological role, located on the platform of the 30S subunit, it bridges several disparate RNA helices of the 16S rRNA. Forms part of the Shine-Dalgarno cleft in the 70S ribosome. This is Small ribosomal subunit protein uS11 from Anaeromyxobacter sp. (strain Fw109-5).